The primary structure comprises 242 residues: UPF0309 protein BOV_A0853 (242 aa).

The 180-residue stretch at 30-209 folds into the SIS domain; it reads AADLIAAAAR…FADVAARLVG (180 aa).

Belongs to the UPF0309 family.

The chain is UPF0309 protein BOV_A0853 from Brucella ovis (strain ATCC 25840 / 63/290 / NCTC 10512).